The primary structure comprises 421 residues: Fusaric acid cluster transcription factor FUB10 (421 aa).

The segment at residues 16 to 47 (CDRCRAQKLRCHRDSGHSTDACLRCLKSGIEC) is a DNA-binding region (zn(2)-C6 fungal-type). The segment at 50-92 (SKARPTGRPPSRQVQPTVVVEQGDTSSSSHTTDSSPSAGGTDM) is disordered. The span at 74 to 86 (TSSSSHTTDSSPS) shows a compositional bias: low complexity.

It is found in the nucleus. Transcription factor that regulates the expression of the gene cluster that mediates the biosynthesis of fusaric acid, a mycotoxin with low to moderate toxicity to animals and humans, but with high phytotoxic properties. The sequence is that of Fusaric acid cluster transcription factor FUB10 from Gibberella moniliformis (strain M3125 / FGSC 7600) (Maize ear and stalk rot fungus).